A 450-amino-acid polypeptide reads, in one-letter code: Tubulin alpha-6 chain (450 aa).

GTP-binding residues include glutamine 11, glutamate 71, glycine 144, threonine 145, threonine 179, asparagine 206, and asparagine 228. Glutamate 71 is a binding site for Mg(2+). Glutamate 254 is an active-site residue. Threonine 349 is subject to Phosphothreonine. A disordered region spans residues 430-450 (KDYEEVGAEGGDDEDDEGEEY). Over residues 431 to 450 (DYEEVGAEGGDDEDDEGEEY) the composition is skewed to acidic residues.

This sequence belongs to the tubulin family. Dimer of alpha and beta chains. A typical microtubule is a hollow water-filled tube with an outer diameter of 25 nm and an inner diameter of 15 nM. Alpha-beta heterodimers associate head-to-tail to form protofilaments running lengthwise along the microtubule wall with the beta-tubulin subunit facing the microtubule plus end conferring a structural polarity. Microtubules usually have 13 protofilaments but different protofilament numbers can be found in some organisms and specialized cells. Interacts with TFCB. It depends on Mg(2+) as a cofactor. Post-translationally, undergoes a tyrosination/detyrosination cycle, the cyclic removal and re-addition of a C-terminal tyrosine residue by the enzymes tubulin tyrosine carboxypeptidase (TTCP) and tubulin tyrosine ligase (TTL), respectively. In terms of processing, acetylation of alpha chains at Lys-40 stabilizes microtubules and affects affinity and processivity of microtubule motors. This modification has a role in multiple cellular functions, ranging from cell motility, cell cycle progression or cell differentiation to intracellular trafficking and signaling.

The protein localises to the cytoplasm. The protein resides in the cytoskeleton. The enzyme catalyses GTP + H2O = GDP + phosphate + H(+). Its function is as follows. Tubulin is the major constituent of microtubules, a cylinder consisting of laterally associated linear protofilaments composed of alpha- and beta-tubulin heterodimers. Microtubules grow by the addition of GTP-tubulin dimers to the microtubule end, where a stabilizing cap forms. Below the cap, tubulin dimers are in GDP-bound state, owing to GTPase activity of alpha-tubulin. The polypeptide is Tubulin alpha-6 chain (TUBA6) (Arabidopsis thaliana (Mouse-ear cress)).